The primary structure comprises 497 residues: 4,4'-diapolycopene oxygenase (497 aa).

Belongs to the carotenoid/retinoid oxidoreductase family. Requires FAD as cofactor.

The catalysed reaction is all-trans-4,4'-diapolycopene + 4 AH2 + 4 O2 = all-trans-4,4'-diapolycopene-4,4'-dial + 4 A + 6 H2O. The enzyme catalyses all-trans-4,4'-diaponeurosporene + 2 AH2 + 2 O2 = 4,4'-diaponeurosporenal + 2 A + 3 H2O. The protein operates within carotenoid biosynthesis. Its function is as follows. Involved in the biosynthesis of C30 carotenoids. Catalyzes the oxidation of the terminal methyl side groups of 4,4'-diapolycopene to yield 4,4'-diapolycopen-4,4'-dial via the aldehyde intermediate 4,4'-diapolycopen-al. Also able to catalyze the oxidation of the terminal methyl side group of 4,4'-diaponeurosporene to form 4,4'-diaponeurosporen-4-al. It has moderate to low activity on the C40 substrates neurosporene and lycopene, and has no detectable activity on zeta-carotene or beta-carotene. This is 4,4'-diapolycopene oxygenase from Methylomonas sp.